The sequence spans 598 residues: Ecto-NOX disulfide-thiol exchanger 2 (598 aa).

The region spanning 99 to 178 (KTVFVGGLPE…GRLHVDFAQA (80 aa)) is the RRM domain. 2 coiled-coil regions span residues 264-299 (IQSANSHVRRLVNEKATHEKEMEEAKEKFKQALSGI) and 352-476 (RREE…KQEN).

The protein belongs to the ENOX family. It depends on Cu cation as a cofactor. Glycosylated.

It is found in the cell membrane. The protein resides in the secreted. It localises to the extracellular space. Its activity is regulated as follows. Inhibited by the antitumor sulfonylurea LY181984, the vabilloid capsaicin, and retinoids. May be involved in cell growth. Probably acts as a terminal oxidase of plasma electron transport from cytosolic NAD(P)H via hydroquinones to acceptors at the cell surface. Hydroquinone oxidase activity alternates with a protein disulfide-thiol interchange/oxidoreductase activity which may control physical membrane displacements associated with vesicle budding or cell enlargement. The activities oscillate with a period length of 22 minutes and play a role in control of the ultradian cellular biological clock. The chain is Ecto-NOX disulfide-thiol exchanger 2 (Enox2) from Mus musculus (Mouse).